The following is a 236-amino-acid chain: Small ribosomal subunit protein uS3 (236 aa).

Residues 39-107 form the KH type-2 domain; it reads IRSYVLEELR…ETSLNIVEIR (69 aa). Positions 214 to 236 are disordered; the sequence is ASERRATEADQSGSSSNRRRENA.

This sequence belongs to the universal ribosomal protein uS3 family. In terms of assembly, part of the 30S ribosomal subunit. Forms a tight complex with proteins S10 and S14.

Binds the lower part of the 30S subunit head. Binds mRNA in the 70S ribosome, positioning it for translation. The sequence is that of Small ribosomal subunit protein uS3 from Bartonella tribocorum (strain CIP 105476 / IBS 506).